A 122-amino-acid polypeptide reads, in one-letter code: Large ribosomal subunit protein uL14 (122 aa).

This sequence belongs to the universal ribosomal protein uL14 family. In terms of assembly, part of the 50S ribosomal subunit. Forms a cluster with proteins L3 and L19. In the 70S ribosome, L14 and L19 interact and together make contacts with the 16S rRNA in bridges B5 and B8.

Binds to 23S rRNA. Forms part of two intersubunit bridges in the 70S ribosome. The chain is Large ribosomal subunit protein uL14 from Saccharopolyspora erythraea (strain ATCC 11635 / DSM 40517 / JCM 4748 / NBRC 13426 / NCIMB 8594 / NRRL 2338).